The chain runs to 132 residues: Small ribosomal subunit protein uS9 (132 aa).

This sequence belongs to the universal ribosomal protein uS9 family.

This is Small ribosomal subunit protein uS9 from Leptospira interrogans serogroup Icterohaemorrhagiae serovar copenhageni (strain Fiocruz L1-130).